Reading from the N-terminus, the 157-residue chain is SsrA-binding protein (157 aa).

This sequence belongs to the SmpB family.

The protein localises to the cytoplasm. Functionally, required for rescue of stalled ribosomes mediated by trans-translation. Binds to transfer-messenger RNA (tmRNA), required for stable association of tmRNA with ribosomes. tmRNA and SmpB together mimic tRNA shape, replacing the anticodon stem-loop with SmpB. tmRNA is encoded by the ssrA gene; the 2 termini fold to resemble tRNA(Ala) and it encodes a 'tag peptide', a short internal open reading frame. During trans-translation Ala-aminoacylated tmRNA acts like a tRNA, entering the A-site of stalled ribosomes, displacing the stalled mRNA. The ribosome then switches to translate the ORF on the tmRNA; the nascent peptide is terminated with the 'tag peptide' encoded by the tmRNA and targeted for degradation. The ribosome is freed to recommence translation, which seems to be the essential function of trans-translation. The polypeptide is SsrA-binding protein (Limosilactobacillus reuteri (strain DSM 20016) (Lactobacillus reuteri)).